The primary structure comprises 326 residues: MEMO1 family protein TTHA0924 (326 aa).

It belongs to the MEMO1 family.

The protein is MEMO1 family protein TTHA0924 of Thermus thermophilus (strain ATCC 27634 / DSM 579 / HB8).